The chain runs to 126 residues: Small ribosomal subunit protein eS24 (126 aa).

Residues 98–126 form a disordered region; it reads LYTKPQTSRKQRKEKKNRLKKAGKKTAKK. Residues 104-126 are compositionally biased toward basic residues; sequence TSRKQRKEKKNRLKKAGKKTAKK.

The protein belongs to the eukaryotic ribosomal protein eS24 family.

This Dictyostelium discoideum (Social amoeba) protein is Small ribosomal subunit protein eS24 (rps24).